The sequence spans 3032 residues: Biorientation of chromosomes in cell division protein 1-like 1 (3032 aa).

Over residues 1-31 (MATNPQPQPPPPAPPPPPPQPQPPPPPPGPG) the composition is skewed to pro residues. Disordered regions lie at residues 1–48 (MATN…GAGD), 164–195 (EEAAGSTAPDDEKPESSVITQGAPAPGPSANV), 214–397 (NAAR…LDSD), and 409–465 (VHTS…RGVR). Residues 32–46 (AGPGASGPGSAGAGA) are compositionally biased toward gly residues. Residues 234–243 (KLSSQPSTDV) are compositionally biased toward polar residues. Over residues 244–261 (STDKERGSEDATEREKAT) the composition is skewed to basic and acidic residues. S264 carries the post-translational modification Phosphoserine. Residues 310-391 (TDPKIKSMDK…RAAEGTKEDC (82 aa)) are compositionally biased toward basic and acidic residues. The segment covering 416–441 (SFEEDTEEEVVVSESMEEGEITSEDE) has biased composition (acidic residues). Residue K471 is modified to N6-acetyllysine. S480 and S482 each carry phosphoserine. Disordered stretches follow at residues 480–1153 (SDSD…HKAT), 1165–1296 (MVDS…HNSN), 1309–1366 (GGRA…LSED), 1424–1491 (AAGE…SGRR), 1675–1701 (GSLSSEDVDGSQENRIQVGPKKETEGT), 1740–1858 (AKPQ…GHAS), and 1934–1978 (ALAG…ISTG). Composition is skewed to basic and acidic residues over residues 488 to 503 (VEQRRQSIAKEKEERL) and 510 to 525 (REKLEEKRKQKAEKTK). Residue K534 is modified to N6-acetyllysine. Basic and acidic residues-rich tracts occupy residues 547–568 (LEPKAPRIKEVLKERKVLEKKV) and 578–653 (SRNV…EYKR). Phosphoserine is present on residues S632 and S656. T657 carries the phosphothreonine modification. Composition is skewed to basic and acidic residues over residues 668 to 736 (TDTR…DKPS), 743 to 768 (GDSVHKMSDETELHSSEKGETEESVR), and 799 to 846 (RDGK…KLQK). Over residues 848-859 (ALSSKQHSVTSQ) the composition is skewed to polar residues. 4 stretches are compositionally biased toward basic and acidic residues: residues 860–872 (KRSESCSEDKCET), 934–960 (KPDKEKNTEDNDTERQRKFKLEDRTSE), 978–1015 (AQKDSGHRAKLASIKEKHKTDKDSTSSKLERKVSDGHR), and 1022–1069 (SNKD…ENRR). S1071 is modified (phosphoserine). Residues 1086-1096 (MSGTTSSSSLQ) show a composition bias toward polar residues. Position 1138 is a phosphoserine (S1138). Over residues 1272–1286 (STDSDLLSSSGSVTV) the composition is skewed to low complexity. Over residues 1312-1329 (ASTSLANHSDVPNQYSTV) the composition is skewed to polar residues. Residues S1315 and S1364 each carry the phosphoserine modification. Basic and acidic residues-rich tracts occupy residues 1428-1470 (HVVD…RRDS) and 1479-1491 (GKMERGAAGSGRR). Phosphoserine is present on residues S1676 and S1685. A compositionally biased stretch (basic and acidic residues) spans 1958 to 1970 (HHSDSQLTRKETV). Phosphoserine occurs at positions 1989, 2001, 2092, and 2166. Positions 2082–2101 (PMPSAVSGENSQLTASRSEE) are disordered. Residues 2088–2097 (SGENSQLTAS) show a composition bias toward polar residues. 4 disordered regions span residues 2303–2322 (EENQQATHNPEGNGGHLATK), 2370–2469 (EPSV…HCLT), 2536–2559 (EGGLPTKSDHSGTWTSEGSPEKMG), and 2575–2596 (DVTLPPEDNGCGVGNEESPPKG). Phosphoserine is present on residues S2417 and S2443. The span at 2449-2459 (CLREPEQKPAE) shows a compositional bias: basic and acidic residues. Position 2554 is a phosphoserine (S2554). S2681 is modified (phosphoserine). The disordered stretch occupies residues 2682–3032 (TEALSGCSVE…DENPLKKAKR (351 aa)). Composition is skewed to acidic residues over residues 2692–2701 (ADPEEVEEEE) and 2715–2725 (SSEEELDDSPD). A compositionally biased stretch (basic and acidic residues) spans 2727–2750 (LDSRIETAQRQYSETEPHDTKEEN). Polar residues predominate over residues 2758–2769 (SSVTSKTNSSTG). Positions 2782–2804 (TGEKTEPNEDDGSIKSQEDDHPI) are enriched in basic and acidic residues. The segment covering 2805 to 2815 (IIKRRRGRPRK) has biased composition (basic residues). The a.T hook DNA-binding region spans 2807–2819 (KRRRGRPRKYPAE). A compositionally biased stretch (basic and acidic residues) spans 2822-2832 (FKSKEDSKTET). Residues 2833 to 2843 (DITTVEQSSPS) are compositionally biased toward polar residues. A phosphoserine mark is found at S2840 and S2841. Residues 2853–2867 (ESNKEIANLEEKSTS) are compositionally biased toward basic and acidic residues. S2888 bears the Phosphoserine mark. T2890 is subject to Phosphothreonine. A phosphoserine mark is found at S2892, S2898, and S2907. Residues K2915 and K2916 each participate in a glycyl lysine isopeptide (Lys-Gly) (interchain with G-Cter in ubiquitin) cross-link. Acidic residues predominate over residues 2919 to 2932 (ESDEEEEEEEEEEP). S2920 carries the phosphoserine modification. Over residues 2975–2987 (LAKEKLSTSEKVS) the composition is skewed to basic and acidic residues. At S3000 the chain carries Phosphoserine. Residues 3020 to 3032 (QKVDENPLKKAKR) show a composition bias toward basic and acidic residues.

It belongs to the BOD1 family. As to quaternary structure, interacts (via COMPASS-Shg1 domain) with SETD1A at stalled replication forks; this interaction mediates FANCD2-dependent nucleosome remodeling at reversed forks protecting them from nucleolytic degradation.

It is found in the chromosome. In terms of biological role, component of the fork protection machinery required to protect stalled/damaged replication forks from uncontrolled DNA2-dependent resection. Acts by stabilizing RAD51 at stalled replication forks and protecting RAD51 nucleofilaments from the antirecombinogenic activities of FBH1 and BLM. Does not regulate spindle orientation. This chain is Biorientation of chromosomes in cell division protein 1-like 1, found in Mus musculus (Mouse).